A 35-amino-acid chain; its full sequence is Cupiennin-2a (35 aa).

Lysine 35 bears the Lysine amide mark.

In terms of tissue distribution, expressed by the venom gland.

It localises to the secreted. This chain is Cupiennin-2a, found in Cupiennius salei (American wandering spider).